The sequence spans 402 residues: NADH-quinone oxidoreductase subunit D (402 aa).

It belongs to the complex I 49 kDa subunit family. In terms of assembly, NDH-1 is composed of 14 different subunits. Subunits NuoB, C, D, E, F, and G constitute the peripheral sector of the complex.

The protein resides in the cell inner membrane. The catalysed reaction is a quinone + NADH + 5 H(+)(in) = a quinol + NAD(+) + 4 H(+)(out). Functionally, NDH-1 shuttles electrons from NADH, via FMN and iron-sulfur (Fe-S) centers, to quinones in the respiratory chain. The immediate electron acceptor for the enzyme in this species is believed to be ubiquinone. Couples the redox reaction to proton translocation (for every two electrons transferred, four hydrogen ions are translocated across the cytoplasmic membrane), and thus conserves the redox energy in a proton gradient. The sequence is that of NADH-quinone oxidoreductase subunit D from Protochlamydia amoebophila (strain UWE25).